A 463-amino-acid chain; its full sequence is L-seryl-tRNA(Sec) selenium transferase (463 aa).

Lys295 bears the N6-(pyridoxal phosphate)lysine mark.

This sequence belongs to the SelA family. As to quaternary structure, homodecamer; pentamer of dimers. Binds only one seryl-tRNA(Sec) per dimer. It depends on pyridoxal 5'-phosphate as a cofactor.

The protein resides in the cytoplasm. It carries out the reaction L-seryl-tRNA(Sec) + selenophosphate + H(+) = L-selenocysteinyl-tRNA(Sec) + phosphate. The protein operates within aminoacyl-tRNA biosynthesis; selenocysteinyl-tRNA(Sec) biosynthesis; selenocysteinyl-tRNA(Sec) from L-seryl-tRNA(Sec) (bacterial route): step 1/1. Functionally, converts seryl-tRNA(Sec) to selenocysteinyl-tRNA(Sec) required for selenoprotein biosynthesis. The polypeptide is L-seryl-tRNA(Sec) selenium transferase (Salmonella arizonae (strain ATCC BAA-731 / CDC346-86 / RSK2980)).